Here is an 84-residue protein sequence, read N- to C-terminus: Small ribosomal subunit protein bS20 (84 aa).

The protein belongs to the bacterial ribosomal protein bS20 family.

Binds directly to 16S ribosomal RNA. In Lacticaseibacillus casei (strain BL23) (Lactobacillus casei), this protein is Small ribosomal subunit protein bS20.